Consider the following 306-residue polypeptide: Agmatinase (306 aa).

The Mn(2+) site is built by histidine 126, aspartate 149, histidine 151, aspartate 153, aspartate 230, and aspartate 232.

This sequence belongs to the arginase family. Agmatinase subfamily. Requires Mn(2+) as cofactor.

It catalyses the reaction agmatine + H2O = urea + putrescine. The protein operates within amine and polyamine biosynthesis; putrescine biosynthesis via agmatine pathway; putrescine from agmatine: step 1/1. In terms of biological role, catalyzes the formation of putrescine from agmatine. This is Agmatinase from Escherichia coli (strain SE11).